The sequence spans 142 residues: Relaxin-3 (142 aa).

The N-terminal stretch at 1-25 is a signal peptide; it reads MARYKLLLLLAVWVLTGELWPGAEA. 3 cysteine pairs are disulfide-bonded: Cys-35/Cys-129, Cys-47/Cys-142, and Cys-128/Cys-133. Residues 55–118 constitute a propeptide, connecting peptide; it reads SDILAHEAMG…GTPGALRGSR (64 aa).

The protein belongs to the insulin family. In terms of assembly, heterodimer of a B chain and an A chain linked by two disulfide bonds.

The protein resides in the secreted. May play a role in neuropeptide signaling processes. Ligand for LGR7, RXFP3 and RXFP4. The chain is Relaxin-3 (RLN3) from Pan troglodytes (Chimpanzee).